A 347-amino-acid chain; its full sequence is tRNA N6-adenosine threonylcarbamoyltransferase (347 aa).

2 residues coordinate Fe cation: histidine 117 and histidine 121. Substrate is bound by residues leucine 140–glycine 144, aspartate 173, glycine 186, and asparagine 280. Fe cation is bound at residue aspartate 308.

The protein belongs to the KAE1 / TsaD family. Fe(2+) serves as cofactor.

The protein resides in the cytoplasm. The enzyme catalyses L-threonylcarbamoyladenylate + adenosine(37) in tRNA = N(6)-L-threonylcarbamoyladenosine(37) in tRNA + AMP + H(+). Its function is as follows. Required for the formation of a threonylcarbamoyl group on adenosine at position 37 (t(6)A37) in tRNAs that read codons beginning with adenine. Is involved in the transfer of the threonylcarbamoyl moiety of threonylcarbamoyl-AMP (TC-AMP) to the N6 group of A37, together with TsaE and TsaB. TsaD likely plays a direct catalytic role in this reaction. The polypeptide is tRNA N6-adenosine threonylcarbamoyltransferase (Psychrobacter sp. (strain PRwf-1)).